The following is a 69-amino-acid chain: Large ribosomal subunit protein bL32c (69 aa).

It belongs to the bacterial ribosomal protein bL32 family.

It localises to the plastid. Its subcellular location is the chloroplast. The sequence is that of Large ribosomal subunit protein bL32c (rpl32) from Anthoceros angustus (Hornwort).